The following is an 831-amino-acid chain: SID1 transmembrane family member 1 (831 aa).

An N-terminal signal peptide occupies residues 1 to 19 (MLDCPRLALLCALPWLLRA). The Extracellular portion of the chain corresponds to 20–308 (AVPGHRAEPL…SVKGSVYVKS (289 aa)). N-linked (GlcNAc...) asparagine glycosylation is found at N67, N83, N136, and N281. Residues 309 to 329 (SLFSVFVFLSFYLGCLLVVFV) traverse the membrane as a helical segment. Residues 330–441 (HHMRFQRKPV…DRRIVSKKYK (112 aa)) are Cytoplasmic-facing. Positions 354-408 (VSHPITASTPEGSNYGAIDESSSSPGRQMSSSDGGQPCHSDTDSSVEESDFDTMP) are disordered. The span at 374 to 385 (SSSSPGRQMSSS) shows a compositional bias: low complexity. The segment covering 397-408 (SSVEESDFDTMP) has biased composition (acidic residues). A helical transmembrane segment spans residues 442 to 462 (IYFWNIITIAVFYALPVMQLV). Topologically, residues 463-493 (ITYQTVVNVTGNQDICYYNFLCAHPLGVLSA) are extracellular. An N-linked (GlcNAc...) asparagine glycan is attached at N470. The helical transmembrane segment at 494–514 (FNNILSNLGHVLLGFLFLLIV) threads the bilayer. Residues 515 to 540 (LRRDLLHRRALEAKDIFAMEYGIPKH) lie on the Cytoplasmic side of the membrane. The chain crosses the membrane as a helical span at residues 541–561 (FGLFYAMGIALMMEGVLSACY). At 562–571 (HVCPNYSNFQ) the chain is on the extracellular side. N566 is a glycosylation site (N-linked (GlcNAc...) asparagine). Residues 572 to 589 (FDTSFMYMIAGLCMLKLY) form a helical membrane-spanning segment. Residues 590-599 (QTRHPDINAS) lie on the Cytoplasmic side of the membrane. A helical transmembrane segment spans residues 600–620 (AYSAYASFAVVITLTVLGVVF). Residues 621 to 625 (GKNDV) are Extracellular-facing. The chain crosses the membrane as a helical span at residues 626–646 (WFWIIFSAIHVLASLALSTQI). Topologically, residues 647–687 (YYMGRFKIDVSDTDLGIFRRAAMVFYTDCIQQCSRPLYMDR) are cytoplasmic. Residues 688–708 (MVLLIVGNLVNWSFALFGLIY) form a helical membrane-spanning segment. The Extracellular segment spans residues 709–714 (RPRDFA). Residues 715–735 (SYMLGIFICNLLLYLAFYIIM) form a helical membrane-spanning segment. Topologically, residues 736–745 (KLRSSEKVLP) are cytoplasmic. Residues 746–766 (LPVFCIVATAVVWAAALYFFF) form a helical membrane-spanning segment. The Extracellular portion of the chain corresponds to 767–795 (QNLSSWEGTPAESREKNRECVLLGFFDDH). N-linked (GlcNAc...) asparagine glycosylation occurs at N768. The chain crosses the membrane as a helical span at residues 796–816 (DIWHFLSATALFFSFLVLLTL). At 817–831 (DDDLDVVRRDQIPVF) the chain is on the cytoplasmic side.

Belongs to the SID1 family.

Its subcellular location is the membrane. In vitro binds long double-stranded RNA (dsRNA) (500 and 700 base pairs), but not dsRNA shorter than 300 bp. Not involved in RNA autophagy, a process in which RNA is directly imported into lysosomes in an ATP-dependent manner, and degraded. The sequence is that of SID1 transmembrane family member 1 (Sidt1) from Rattus norvegicus (Rat).